Reading from the N-terminus, the 320-residue chain is ATP-dependent 6-phosphofructokinase (320 aa).

An ATP-binding site is contributed by Gly-12. ADP is bound by residues 22–26 (RGVVR) and 55–60 (RYSVSD). ATP is bound by residues 73 to 74 (RF) and 103 to 106 (GDGS). Asp-104 serves as a coordination point for Mg(2+). Residue 126–128 (TID) participates in substrate binding. The Proton acceptor role is filled by Asp-128. Position 155 (Arg-155) interacts with ADP. Substrate is bound by residues Arg-163 and 170 to 172 (MGR). ADP contacts are provided by residues 186-188 (GCE), Lys-212, and 214-216 (KKH). Substrate is bound by residues Glu-223, Arg-244, and 250-253 (HIQR).

The protein belongs to the phosphofructokinase type A (PFKA) family. ATP-dependent PFK group I subfamily. Prokaryotic clade 'B1' sub-subfamily. Homotetramer. Requires Mg(2+) as cofactor.

It localises to the cytoplasm. The catalysed reaction is beta-D-fructose 6-phosphate + ATP = beta-D-fructose 1,6-bisphosphate + ADP + H(+). Its pathway is carbohydrate degradation; glycolysis; D-glyceraldehyde 3-phosphate and glycerone phosphate from D-glucose: step 3/4. Its activity is regulated as follows. Allosterically activated by ADP and other diphosphonucleosides, and allosterically inhibited by phosphoenolpyruvate. Its function is as follows. Catalyzes the phosphorylation of D-fructose 6-phosphate to fructose 1,6-bisphosphate by ATP, the first committing step of glycolysis. The polypeptide is ATP-dependent 6-phosphofructokinase (Salmonella gallinarum (strain 287/91 / NCTC 13346)).